Consider the following 128-residue polypeptide: Flagellar basal body rod protein FlgB (128 aa).

Belongs to the flagella basal body rod proteins family. The basal body constitutes a major portion of the flagellar organelle and consists of a number of rings mounted on a central rod. In Gram-negative bacteria, at least four rings, L, P, S and M are present, whereas Gram-positive bacteria lack the L and P rings. The rod consists of about 26 subunits of FlgG in the distal portion, and FlgB, FlgC and FlgF build up the proximal portion of the rod with about 6 subunits each. Rod assembly occurs by export via the flagellum-specific pathway of its constituent proteins and by their incorporation into the rod structure in the probable order of FlgB, FlgC, FlgF and FlgG. Another protein, FliE, also assembles onto the stable rod structure.

It localises to the bacterial flagellum basal body. Structural component of flagellum, the bacterial motility apparatus. Part of the rod structure of flagellar basal body. This chain is Flagellar basal body rod protein FlgB, found in Cereibacter sphaeroides (strain ATCC 17023 / DSM 158 / JCM 6121 / CCUG 31486 / LMG 2827 / NBRC 12203 / NCIMB 8253 / ATH 2.4.1.) (Rhodobacter sphaeroides).